We begin with the raw amino-acid sequence, 318 residues long: Probable dual-specificity RNA methyltransferase RlmN (318 aa).

The active-site Proton acceptor is the Glu63. One can recognise a Radical SAM core domain in the interval 69-299; it reads HDYGRTVCVS…VSLRRELGAD (231 aa). Cys76 and Cys304 are joined by a disulfide. Cys83, Cys87, and Cys90 together coordinate [4Fe-4S] cluster. Residues 130-131, Ser162, 185-187, and Asn261 each bind S-adenosyl-L-methionine; these read GE and SLH. The S-methylcysteine intermediate role is filled by Cys304.

Belongs to the radical SAM superfamily. RlmN family. [4Fe-4S] cluster is required as a cofactor.

The protein localises to the cytoplasm. It catalyses the reaction adenosine(2503) in 23S rRNA + 2 reduced [2Fe-2S]-[ferredoxin] + 2 S-adenosyl-L-methionine = 2-methyladenosine(2503) in 23S rRNA + 5'-deoxyadenosine + L-methionine + 2 oxidized [2Fe-2S]-[ferredoxin] + S-adenosyl-L-homocysteine. The enzyme catalyses adenosine(37) in tRNA + 2 reduced [2Fe-2S]-[ferredoxin] + 2 S-adenosyl-L-methionine = 2-methyladenosine(37) in tRNA + 5'-deoxyadenosine + L-methionine + 2 oxidized [2Fe-2S]-[ferredoxin] + S-adenosyl-L-homocysteine. Its function is as follows. Specifically methylates position 2 of adenine 2503 in 23S rRNA and position 2 of adenine 37 in tRNAs. This chain is Probable dual-specificity RNA methyltransferase RlmN, found in Desulforudis audaxviator (strain MP104C).